Consider the following 138-residue polypeptide: Acidic phospholipase A2 PL1 (138 aa).

Positions 1 to 16 (MRALWIVAVCLIGAEG) are cleaved as a signal peptide. 7 disulfides stabilise this stretch: C42-C131, C44-C60, C59-C111, C65-C138, C66-C104, C73-C97, and C91-C102. Y43, G45, and G47 together coordinate Ca(2+). H63 is a catalytic residue. D64 is a Ca(2+) binding site. Residue D105 is part of the active site.

Belongs to the phospholipase A2 family. Group II subfamily. D49 sub-subfamily. The cofactor is Ca(2+). Expressed by the venom gland.

The protein localises to the secreted. It carries out the reaction a 1,2-diacyl-sn-glycero-3-phosphocholine + H2O = a 1-acyl-sn-glycero-3-phosphocholine + a fatty acid + H(+). PLA2 catalyzes the calcium-dependent hydrolysis of the 2-acyl groups in 3-sn-phosphoglycerides. In Vipera renardi (Steppe viper), this protein is Acidic phospholipase A2 PL1.